A 473-amino-acid chain; its full sequence is Uronate isomerase (473 aa).

This sequence belongs to the metallo-dependent hydrolases superfamily. Uronate isomerase family.

The catalysed reaction is D-glucuronate = D-fructuronate. It carries out the reaction aldehydo-D-galacturonate = keto-D-tagaturonate. It participates in carbohydrate metabolism; pentose and glucuronate interconversion. The protein is Uronate isomerase (uxaC) of Bacillus subtilis (strain 168).